A 387-amino-acid chain; its full sequence is Mitogen-activated protein kinase homolog MMK1 (387 aa).

The Protein kinase domain occupies 55–340 (KPPIMPIGKG…VEDALAHPYL (286 aa)). ATP-binding positions include 61-69 (IGKGAYGIV) and lysine 84. The active-site Proton acceptor is aspartate 181. A Phosphothreonine modification is found at threonine 213. The short motif at 213-215 (TEY) is the TXY element. A Phosphotyrosine modification is found at tyrosine 215.

The protein belongs to the protein kinase superfamily. CMGC Ser/Thr protein kinase family. MAP kinase subfamily. It depends on Mg(2+) as a cofactor. Dually phosphorylated on Thr-213 and Tyr-215, which activates the enzyme. Autophosphorylated. As to expression, roots and stems.

It carries out the reaction L-seryl-[protein] + ATP = O-phospho-L-seryl-[protein] + ADP + H(+). The enzyme catalyses L-threonyl-[protein] + ATP = O-phospho-L-threonyl-[protein] + ADP + H(+). Activated by tyrosine and threonine phosphorylation. Its function is as follows. May play a role in the mitogenic induction of symbiotic root nodules on Alfalfa by Rhizobium signal molecules. In Medicago sativa (Alfalfa), this protein is Mitogen-activated protein kinase homolog MMK1 (MMK1).